A 354-amino-acid polypeptide reads, in one-letter code: Putative [LysW]-L-2-aminoadipate/[LysW]-L-glutamate phosphate reductase (354 aa).

NADP(+) is bound by residues 10-13 and 34-36; these read SGVI and SRR. Cysteine 153 is an active-site residue. Asparagine 321 contacts NADP(+).

It belongs to the NAGSA dehydrogenase family. Type 1 subfamily. LysY sub-subfamily.

The protein localises to the cytoplasm. It catalyses the reaction [amino-group carrier protein]-C-terminal-N-(1-carboxy-5-oxopentan-1-yl)-L-glutamine + phosphate + NADP(+) = [amino-group carrier protein]-C-terminal-N-(1-carboxy-5-phosphooxy-5-oxopentan-1-yl)-L-glutamine + NADPH + H(+). It carries out the reaction [amino-group carrier protein]-C-terminal-gamma-(L-glutamyl-5-semialdehyde)-L-glutamate + phosphate + NADP(+) = [amino-group carrier protein]-C-terminal-gamma-(5-phospho-L-glutamyl)-L-glutamate + NADPH + H(+). It participates in amino-acid biosynthesis; L-lysine biosynthesis via AAA pathway; L-lysine from L-alpha-aminoadipate (Thermus route): step 3/5. It functions in the pathway amino-acid biosynthesis; L-arginine biosynthesis. In terms of biological role, involved in both the arginine and lysine biosynthetic pathways. The chain is Putative [LysW]-L-2-aminoadipate/[LysW]-L-glutamate phosphate reductase from Caldivirga maquilingensis (strain ATCC 700844 / DSM 13496 / JCM 10307 / IC-167).